The sequence spans 246 residues: Phosphomannomutase (246 aa).

The active-site Nucleophile is Asp-13. Residues Asp-13 and Asp-15 each contribute to the Mg(2+) site. Asp-15 acts as the Proton donor/acceptor in catalysis. Alpha-D-mannose 1-phosphate-binding residues include Arg-22, Arg-124, Arg-135, Arg-142, Ser-180, and Asp-182. Asp-208, Tyr-220, and Thr-225 together coordinate Mg(2+).

It belongs to the eukaryotic PMM family. Homodimer. It depends on Mg(2+) as a cofactor. Expressed in roots, stems, leaves, flowers and immature fruits.

The protein localises to the cytoplasm. It carries out the reaction alpha-D-mannose 1-phosphate = D-mannose 6-phosphate. It functions in the pathway nucleotide-sugar biosynthesis; GDP-alpha-D-mannose biosynthesis; alpha-D-mannose 1-phosphate from D-fructose 6-phosphate: step 2/2. Catalyzes the interconversion of mannose-6-phosphate to mannose-1-phosphate, the precursor for the synthesis of GDP-mannose. GDP-mannose is an essential sugar nucleotide for the synthesis of D-mannose-containing cell wall polysaccharides (galactomannans and glucomannans), glycolipids, glycoproteins and the antioxidant L-ascorbate. Can complement the yeast temperature-sensitive mutant sec53-6. This chain is Phosphomannomutase, found in Arabidopsis thaliana (Mouse-ear cress).